A 395-amino-acid polypeptide reads, in one-letter code: Succinate--CoA ligase [ADP-forming] subunit beta (395 aa).

Residues arginine 9–lysine 240 form the ATP-grasp domain. ATP is bound by residues lysine 49, glycine 56–glycine 58, alanine 98, and glutamate 103. Asparagine 195 and aspartate 209 together coordinate Mg(2+). Substrate is bound by residues asparagine 260 and glycine 322–threonine 324.

This sequence belongs to the succinate/malate CoA ligase beta subunit family. As to quaternary structure, heterotetramer of two alpha and two beta subunits. Requires Mg(2+) as cofactor.

It catalyses the reaction succinate + ATP + CoA = succinyl-CoA + ADP + phosphate. The catalysed reaction is GTP + succinate + CoA = succinyl-CoA + GDP + phosphate. It participates in carbohydrate metabolism; tricarboxylic acid cycle; succinate from succinyl-CoA (ligase route): step 1/1. In terms of biological role, succinyl-CoA synthetase functions in the citric acid cycle (TCA), coupling the hydrolysis of succinyl-CoA to the synthesis of either ATP or GTP and thus represents the only step of substrate-level phosphorylation in the TCA. The beta subunit provides nucleotide specificity of the enzyme and binds the substrate succinate, while the binding sites for coenzyme A and phosphate are found in the alpha subunit. This chain is Succinate--CoA ligase [ADP-forming] subunit beta, found in Beutenbergia cavernae (strain ATCC BAA-8 / DSM 12333 / CCUG 43141 / JCM 11478 / NBRC 16432 / NCIMB 13614 / HKI 0122).